A 325-amino-acid polypeptide reads, in one-letter code: Peroxidase 1 (325 aa).

The signal sequence occupies residues 1–21; it reads MAIKNILALVVLLSVVGVSVA. Cystine bridges form between cysteine 35–cysteine 113, cysteine 68–cysteine 73, cysteine 119–cysteine 321, and cysteine 198–cysteine 230. Histidine 66 acts as the Proton acceptor in catalysis. Aspartate 67, valine 70, glycine 72, aspartate 74, and serine 76 together coordinate Ca(2+). Residue proline 161 participates in substrate binding. Histidine 191 is a heme b binding site. Position 192 (threonine 192) interacts with Ca(2+). A glycan (N-linked (GlcNAc...) asparagine) is linked at asparagine 207. Residues aspartate 242, serine 245, and aspartate 250 each contribute to the Ca(2+) site.

It belongs to the peroxidase family. Classical plant (class III) peroxidase subfamily. It depends on heme b as a cofactor. The cofactor is Ca(2+). In terms of tissue distribution, slightly expressed in roots.

It localises to the secreted. The enzyme catalyses 2 a phenolic donor + H2O2 = 2 a phenolic radical donor + 2 H2O. Removal of H(2)O(2), oxidation of toxic reductants, biosynthesis and degradation of lignin, suberization, auxin catabolism, response to environmental stresses such as wounding, pathogen attack and oxidative stress. These functions might be dependent on each isozyme/isoform in each plant tissue. This chain is Peroxidase 1 (PER1), found in Arabidopsis thaliana (Mouse-ear cress).